A 426-amino-acid chain; its full sequence is Spermatogenesis-associated protein 2-like protein (426 aa).

Disordered regions lie at residues 204–223 (AQDEEPPPLPPRGTPATYGA), 234–256 (DESSEASLYGEPSPGLDSPPVEL), 269–300 (LWGSGGQPWEPPADDMHRASSPPYGALEEELE), and 316–347 (SRSGDLAPPESPSSPGQASPRHRQAEAAASSA). Residues S318 and S326 each carry the phosphoserine modification.

It belongs to the SPATA2 family.

The protein is Spermatogenesis-associated protein 2-like protein of Mus musculus (Mouse).